The following is a 213-amino-acid chain: Orotate phosphoribosyltransferase (213 aa).

Lys-26 provides a ligand contact to 5-phospho-alpha-D-ribose 1-diphosphate. 34-35 (FF) contributes to the orotate binding site. 5-phospho-alpha-D-ribose 1-diphosphate-binding positions include 72–73 (YK), Arg-99, Lys-100, Lys-103, His-105, and 124–132 (DDVITAGTA). Orotate is bound by residues Thr-128 and Arg-156.

This sequence belongs to the purine/pyrimidine phosphoribosyltransferase family. PyrE subfamily. In terms of assembly, homodimer. Requires Mg(2+) as cofactor.

It carries out the reaction orotidine 5'-phosphate + diphosphate = orotate + 5-phospho-alpha-D-ribose 1-diphosphate. Its pathway is pyrimidine metabolism; UMP biosynthesis via de novo pathway; UMP from orotate: step 1/2. Its function is as follows. Catalyzes the transfer of a ribosyl phosphate group from 5-phosphoribose 1-diphosphate to orotate, leading to the formation of orotidine monophosphate (OMP). The chain is Orotate phosphoribosyltransferase from Yersinia enterocolitica serotype O:8 / biotype 1B (strain NCTC 13174 / 8081).